A 262-amino-acid chain; its full sequence is Acyl-coenzyme A diphosphatase FITM2 (262 aa).

Residues 1–23 (MEHLERCAWVLRGTLVRSAVRKY) are Cytoplasmic-facing. The helical transmembrane segment at 24–44 (LPWALAASMLAGSLLKELSPL) threads the bilayer. The Lumenal portion of the chain corresponds to 45–57 (PESYLSNKRNVLN). The chain crosses the membrane as a helical span at residues 58–78 (VYFVKVAWAWTFCLLLPFIAL). The Cytoplasmic portion of the chain corresponds to 79–93 (TNYHLTGKAGLVLRR). The helical transmembrane segment at 94–114 (LSTLLVGTAIWYVCTAIFSNI) threads the bilayer. The Lumenal segment spans residues 115-145 (EHYTGSCYQSPALEGERKEHQSKQQCHGEGG). The chain crosses the membrane as a helical span at residues 146–166 (FWHGFDISGHSFLLTFCALMI). His155 is an active-site residue. Residues 167–190 (VEEMAVLHEVKTDRNHCLHAAITT) lie on the Cytoplasmic side of the membrane. A helical transmembrane segment spans residues 191 to 211 (LVVALGFLTFIWVWMFLCTAV). Over 212-218 (YFHNLSQ) the chain is Lumenal. Residue His214 is part of the active site. The chain crosses the membrane as a helical span at residues 219-239 (KVFGTLFGLLGWYGTYGCWYL). Over 240-262 (KSFSPGLPPQSSSLNLKQDTYKK) the chain is Cytoplasmic.

It belongs to the FIT family. FIT2 subfamily.

It is found in the endoplasmic reticulum membrane. The enzyme catalyses an acyl-CoA + H2O = an acyl-4'-phosphopantetheine + adenosine 3',5'-bisphosphate + 2 H(+). It carries out the reaction (9Z)-octadecenoyl-CoA + H2O = S-(9Z-octadecenoyl)-4'-phosphopantetheine + adenosine 3',5'-bisphosphate + 2 H(+). It catalyses the reaction (5Z,8Z,11Z,14Z)-eicosatetraenoyl-CoA + H2O = S-(5Z,8Z,11Z,14Z-eicosatetraenoyl)-4'-phosphopantetheine + adenosine 3',5'-bisphosphate + 2 H(+). The catalysed reaction is hexadecanoyl-CoA + H2O = S-hexadecanoyl-4'-phosphopantetheine + adenosine 3',5'-bisphosphate + 2 H(+). Functionally, fatty acyl-coenzyme A (CoA) diphosphatase that hydrolyzes fatty acyl-CoA to yield acyl-4'-phosphopantetheine and adenosine 3',5'-bisphosphate. Preferentially hydrolyzes unsaturated long-chain acyl-CoA substrates such as oleoyl-CoA/(9Z)-octadecenoyl-CoA and arachidonoyl-CoA/(5Z,8Z,11Z,14Z)-eicosatetraenoyl-CoA in the endoplasmic reticulum (ER) lumen. This catalytic activity is required for maintaining ER structure and for lipid droplets (LDs) biogenesis, which are lipid storage organelles involved in maintaining lipid and energy homeostasis. Directly binds to diacylglycerol (DAGs) and triacylglycerol, which is also important for LD biogenesis. May support directional budding of nacent LDs from the ER into the cytosol by reducing DAG levels at sites of LD formation. Plays a role in the regulation of cell morphology and cytoskeletal organization. This is Acyl-coenzyme A diphosphatase FITM2 from Bos taurus (Bovine).